The sequence spans 331 residues: 3-dehydroquinate synthase homolog (331 aa).

This sequence belongs to the archaeal-type DHQ synthase family.

The sequence is that of 3-dehydroquinate synthase homolog from Persephonella marina (strain DSM 14350 / EX-H1).